We begin with the raw amino-acid sequence, 1026 residues long: SWI/SNF-related matrix-associated actin-dependent regulator of chromatin subfamily A containing DEAD/H box 1 (1026 aa).

Met-1 is subject to N-acetylmethionine. Residues 1-82 (MNLFNLDRFR…DNERKASISY (82 aa)) form a disordered region. Positions 7–19 (DRFRFEKRNKIEE) are enriched in basic and acidic residues. A Phosphothreonine modification is found at Thr-54. At Ser-57 the chain carries Phosphoserine. Residue Thr-71 is modified to Phosphothreonine. A Glycyl lysine isopeptide (Lys-Gly) (interchain with G-Cter in SUMO2) cross-link involves residue Lys-77. Residue Ser-79 is modified to Phosphoserine. Lys-84 is covalently cross-linked (Glycyl lysine isopeptide (Lys-Gly) (interchain with G-Cter in SUMO2)). Phosphoserine is present on residues Ser-124, Ser-127, Ser-132, Ser-146, and Ser-152. One can recognise a CUE 1 domain in the interval 157-199 (LKDAKLQTLKELFPQRSDNDLLKLIESTSTMDGAIAAALLMFG). Disordered stretches follow at residues 203–251 (GGPR…NWEK) and 302–328 (SQSE…KTKL). Phosphoserine is present on residues Ser-211 and Ser-214. Phosphotyrosine is present on Tyr-217. Positions 226-238 (QSIKKTRLDHGEE) are enriched in basic and acidic residues. A phosphoserine mark is found at Ser-239 and Ser-242. One can recognise a CUE 2 domain in the interval 251 to 294 (KQESIVLKLQKEFPNFDKQELREVLKEHEWMYTEALESLKVFAE). At Ser-302 the chain carries Phosphoserine. The span at 314–323 (SRSQNYPKNA) shows a compositional bias: polar residues. Lys-335 is covalently cross-linked (Glycyl lysine isopeptide (Lys-Gly) (interchain with G-Cter in SUMO2)). The disordered stretch occupies residues 354 to 373 (VVEDSEYDSGSDVGSSLDED). Lys-471 is covalently cross-linked (Glycyl lysine isopeptide (Lys-Gly) (interchain with G-Cter in SUMO2)). Positions 509–677 (ALVHKHGLNG…MSLLNFVMPH (169 aa)) constitute a Helicase ATP-binding domain. 521–529 (ADEMGLGKT) serves as a coordination point for ATP. The short motif at 628-631 (DEGH) is the DEGH box element. Residues 721 to 738 (RRVKEEVLKQLPPKKDRI) carry the Nuclear localization signal motif. Lys-724 is covalently cross-linked (Glycyl lysine isopeptide (Lys-Gly) (interchain with G-Cter in SUMO2)). The Helicase C-terminal domain occupies 858–1010 (VLGCILSELK…MTTVDEGDEG (153 aa)). Residue 897 to 904 (YLRLDGKT) coordinates ATP. Lys-996 participates in a covalent cross-link: Glycyl lysine isopeptide (Lys-Gly) (interchain with G-Cter in SUMO2). The short motif at 1005 to 1008 (DEGD) is the DEGD box element.

It belongs to the SNF2/RAD54 helicase family. As to quaternary structure, binds to DNA preferentially in the vicinity of transcriptional start sites. Interacts with MSH2 and TRIM28. Part of a complex composed of TRIM28, HDAC1, HDAC2 and EHMT2. Interacts with PCNA. In terms of tissue distribution, isoform 1 is expressed ubiquitously. Isoform 3 is expressed mainly in skin and esophagus. Expressed in fibroblasts and keratinocytes (at protein level).

It localises to the nucleus. The protein resides in the chromosome. The enzyme catalyses ATP + H2O = ADP + phosphate + H(+). DNA helicase that possesses intrinsic ATP-dependent nucleosome-remodeling activity and is both required for DNA repair and heterochromatin organization. Promotes DNA end resection of double-strand breaks (DSBs) following DNA damage: probably acts by weakening histone DNA interactions in nucleosomes flanking DSBs. Required for the restoration of heterochromatin organization after replication. Acts at replication sites to facilitate the maintenance of heterochromatin by directing H3 and H4 histones deacetylation, H3 'Lys-9' trimethylation (H3K9me3) and restoration of silencing. The sequence is that of SWI/SNF-related matrix-associated actin-dependent regulator of chromatin subfamily A containing DEAD/H box 1 from Homo sapiens (Human).